Consider the following 354-residue polypeptide: Ion-translocating oxidoreductase complex subunit D (354 aa).

4 helical membrane passes run 19–39 (IMLLVFCAAVPGICTEIYYFG), 40–60 (FGVLFQILLSVFFSVSFEFLV), 77–99 (AAVTGVLIGISLPSLSPWWLSFF), and 119–139 (IFNPAMTGYSILLVSFPILMT). T187 carries the FMN phosphoryl threonine modification. Transmembrane regions (helical) follow at residues 221–241 (WISINISFLIGGIVLLGFNVI), 245–265 (IPVSILFSLYVFFALDYYFFK), 268–288 (MYYPIMQLFFGSTMFSVFFIA), 295–315 (SITKIGRIVFGCIVGFLIWLI), and 319–339 (GNYPDAIAFSILLSNSIVPLI).

This sequence belongs to the NqrB/RnfD family. The complex is composed of six subunits: RnfA, RnfB, RnfC, RnfD, RnfE and RnfG. FMN is required as a cofactor.

Its subcellular location is the cell inner membrane. Functionally, part of a membrane-bound complex that couples electron transfer with translocation of ions across the membrane. The chain is Ion-translocating oxidoreductase complex subunit D from Buchnera aphidicola subsp. Baizongia pistaciae (strain Bp).